The chain runs to 546 residues: Glucose-6-phosphate isomerase (546 aa).

Catalysis depends on E353, which acts as the Proton donor. Catalysis depends on residues H384 and K512.

It belongs to the GPI family.

Its subcellular location is the cytoplasm. It catalyses the reaction alpha-D-glucose 6-phosphate = beta-D-fructose 6-phosphate. The protein operates within carbohydrate biosynthesis; gluconeogenesis. It functions in the pathway carbohydrate degradation; glycolysis; D-glyceraldehyde 3-phosphate and glycerone phosphate from D-glucose: step 2/4. In terms of biological role, catalyzes the reversible isomerization of glucose-6-phosphate to fructose-6-phosphate. The polypeptide is Glucose-6-phosphate isomerase (Actinobacillus pleuropneumoniae serotype 3 (strain JL03)).